The primary structure comprises 650 residues: Acetyl-coenzyme A synthetase (650 aa).

Residues 191–194 (RGGR), Thr311, and Asn335 contribute to the CoA site. Residues 387–389 (GEP), 411–416 (DTWWQT), Asp500, and Arg515 each bind ATP. Ser523 contacts CoA. Position 526 (Arg526) interacts with ATP. Positions 537, 539, and 542 each coordinate Mg(2+). Arg584 provides a ligand contact to CoA. At Lys609 the chain carries N6-acetyllysine.

Belongs to the ATP-dependent AMP-binding enzyme family. Mg(2+) serves as cofactor. Post-translationally, acetylated. Deacetylation by the SIR2-homolog deacetylase activates the enzyme.

The enzyme catalyses acetate + ATP + CoA = acetyl-CoA + AMP + diphosphate. In terms of biological role, catalyzes the conversion of acetate into acetyl-CoA (AcCoA), an essential intermediate at the junction of anabolic and catabolic pathways. AcsA undergoes a two-step reaction. In the first half reaction, AcsA combines acetate with ATP to form acetyl-adenylate (AcAMP) intermediate. In the second half reaction, it can then transfer the acetyl group from AcAMP to the sulfhydryl group of CoA, forming the product AcCoA. This chain is Acetyl-coenzyme A synthetase, found in Shewanella baltica (strain OS195).